The following is a 2103-amino-acid chain: Zinc finger SWIM domain-containing protein 8 homolog (2103 aa).

An SWIM-type zinc finger spans residues 191 to 227 (FNVAVTFDRRRISSCNCTCTSSAYWCSHVVAVCLHRI). Disordered regions lie at residues 684–860 (DGNR…GSTA), 1237–1262 (SSNPPVRTRSNQPTRREDHDYGGGSG), 1310–1399 (SSGS…IPNQ), 1735–1772 (MQMFISAGPPPPPQAYGGYQQPPPQQPPNPQQQQQVVQ), 1786–1864 (QQVQ…GVGV), and 1888–1916 (PFMQQAPPQPPQQQQPPPSQPPVRQRQPH). The segment covering 724-740 (SALTESDSQSSFDAVSH) has biased composition (polar residues). Low complexity-rich tracts occupy residues 754–789 (AVGVEQALSTSDTSSASSSSSSASTASGSSNSSTSS) and 835–857 (GRVAMASSGSGSGAGDTVAVGSG). The span at 1237–1249 (SSNPPVRTRSNQP) shows a compositional bias: polar residues. A compositionally biased stretch (low complexity) spans 1320-1351 (GMVPTTNAAGTTGTPSSSSTTVSGSQNPNGNP). Residues 1352 to 1377 (SGSGGGGNGGGGNGGGGGGGGGGGGS) show a composition bias toward gly residues. Residues 1755-1764 (QPPPQQPPNP) are compositionally biased toward pro residues. 2 stretches are compositionally biased toward low complexity: residues 1786 to 1813 (QQVQMAGQAPPGHPGQQGHPGQPPSGFQ) and 1820 to 1835 (AFQALPPQAYQAMQAG). Composition is skewed to pro residues over residues 1836–1859 (PPGPPMGPPQGYYGPPPPPPPNGP) and 1894–1908 (PPQPPQQQQPPPSQP).

The protein belongs to the ZSWIM8 family. In terms of assembly, component of the SCF-like E3 ubiquitin-protein ligase complex.

It participates in protein modification; protein ubiquitination. Substrate recognition component of a SCF-like E3 ubiquitin-protein ligase complex that promotes target-directed microRNA degradation (TDMD), a process that mediates degradation of microRNAs (miRNAs). The SCF-like E3 ubiquitin-protein ligase complex acts by catalyzing ubiquitination and subsequent degradation of AGO1, thereby exposing miRNAs for degradation. This is Zinc finger SWIM domain-containing protein 8 homolog from Drosophila melanogaster (Fruit fly).